A 201-amino-acid polypeptide reads, in one-letter code: Peptide deformylase 2 (201 aa).

Fe cation-binding residues include Cys121 and His163. Residue Glu164 is part of the active site. Fe cation is bound at residue His167.

Belongs to the polypeptide deformylase family. Fe(2+) serves as cofactor.

It catalyses the reaction N-terminal N-formyl-L-methionyl-[peptide] + H2O = N-terminal L-methionyl-[peptide] + formate. Its function is as follows. Removes the formyl group from the N-terminal Met of newly synthesized proteins. Requires at least a dipeptide for an efficient rate of reaction. N-terminal L-methionine is a prerequisite for activity but the enzyme has broad specificity at other positions. This chain is Peptide deformylase 2, found in Prochlorococcus marinus (strain MIT 9313).